Consider the following 297-residue polypeptide: Probable esterase afoC (297 aa).

Ser-136 serves as the catalytic Charge relay system. Residues 204 to 217 (ASSSASASVSGSES) show a composition bias toward low complexity. The disordered stretch occupies residues 204–226 (ASSSASASVSGSESAGEEEEDGH). Residues Asp-240 and His-267 each act as charge relay system in the active site.

This sequence belongs to the LovG family.

In terms of biological role, probable esterase; part of the gene cluster that mediates the biosynthesis of asperfuranone, a probable antitumor agent. The polyketide synthase afoG is responsible for producing the 3,5-dimethyloctadienone moiety from acetyl-CoA, three malonyl-CoA, and two S-adenosyl methionines (SAM). The 3,5-dimethyloctadienone moiety is then loaded onto the SAT domain of afoE and extended with four malonyl-CoA and one SAM, which leads to the formation of 2,4-dihydroxy-6-(5,7-dimethyl-2-oxo-trans-3-trans-5-nonadienyl)-3-methylbenzaldehyde (compound 2) after reductive release and aldol condensation. AfoD is the next enzyme in the biosynthesis sequence and hydroxylates the side chain at the benzylic position of compound 2. After benzylic hydroxylation, a furan ring is formed after five-member ring hemiacetal formation and water elimination. AfoF and afoC are proposed to oxidize the R-diketone proton and to reduce the unconjugated carbonyl group, respectively, to generate asperfuranone. Since no intermediates could be isolated from afoF and afoC deletants, the sequence of these two enzymes is not fully understood. Moreover, since afoC deletant still produces a small amount of asperfuranone, other endogenous oxidoreductases might catalyze the same reaction with much less efficiency. The polypeptide is Probable esterase afoC (Emericella nidulans (strain FGSC A4 / ATCC 38163 / CBS 112.46 / NRRL 194 / M139) (Aspergillus nidulans)).